A 169-amino-acid polypeptide reads, in one-letter code: Styrene-oxide isomerase (169 aa).

The next 4 helical transmembrane spans lie at 13-33 (GILM…HLVG), 61-81 (PALN…LGFA), 85-105 (PHLL…FYFF), and 129-149 (FLAL…LAVI).

It localises to the membrane. The catalysed reaction is styrene oxide = 2-phenylacetaldehyde. Its pathway is aromatic compound metabolism. Functionally, epoxystyrene isomerase that catalyzes the second step in the aerobic styrene degradation pathway by converting epoxystyrene to phenylacetaldehyde. The sequence is that of Styrene-oxide isomerase (styC) from Pseudomonas fluorescens.